The chain runs to 65 residues: Large ribosomal subunit protein bL28 (65 aa).

It belongs to the bacterial ribosomal protein bL28 family.

The chain is Large ribosomal subunit protein bL28 from Pseudothermotoga lettingae (strain ATCC BAA-301 / DSM 14385 / NBRC 107922 / TMO) (Thermotoga lettingae).